Here is a 554-residue protein sequence, read N- to C-terminus: Glucose-6-phosphate isomerase (554 aa).

The active-site Proton donor is the glutamate 359. Active-site residues include histidine 390 and lysine 518.

Belongs to the GPI family.

It is found in the cytoplasm. It carries out the reaction alpha-D-glucose 6-phosphate = beta-D-fructose 6-phosphate. Its pathway is carbohydrate biosynthesis; gluconeogenesis. It functions in the pathway carbohydrate degradation; glycolysis; D-glyceraldehyde 3-phosphate and glycerone phosphate from D-glucose: step 2/4. Its function is as follows. Catalyzes the reversible isomerization of glucose-6-phosphate to fructose-6-phosphate. The chain is Glucose-6-phosphate isomerase from Stutzerimonas stutzeri (strain A1501) (Pseudomonas stutzeri).